An 86-amino-acid polypeptide reads, in one-letter code: Small ribosomal subunit protein bS20 (86 aa).

A disordered region spans residues 1–25 (MANIKSQIKRIRTNEKARQRNKAYK). The span at 12–25 (RTNEKARQRNKAYK) shows a compositional bias: basic and acidic residues.

This sequence belongs to the bacterial ribosomal protein bS20 family.

Its function is as follows. Binds directly to 16S ribosomal RNA. The chain is Small ribosomal subunit protein bS20 from Beutenbergia cavernae (strain ATCC BAA-8 / DSM 12333 / CCUG 43141 / JCM 11478 / NBRC 16432 / NCIMB 13614 / HKI 0122).